Consider the following 334-residue polypeptide: Geranylgeranyl pyrophosphate synthase idtG (334 aa).

Isopentenyl diphosphate contacts are provided by Lys-49, Arg-52, and His-81. Mg(2+) is bound by residues Asp-88 and Asp-92. A dimethylallyl diphosphate-binding site is contributed by Arg-97. Residue Arg-98 participates in isopentenyl diphosphate binding. Residues Lys-175, Thr-176, and Gln-209 each coordinate dimethylallyl diphosphate. Asp-212 lines the Mg(2+) pocket. Dimethylallyl diphosphate contacts are provided by Asn-216, Lys-226, and Lys-236.

This sequence belongs to the FPP/GGPP synthase family. Requires Mg(2+) as cofactor.

It carries out the reaction isopentenyl diphosphate + dimethylallyl diphosphate = (2E)-geranyl diphosphate + diphosphate. The catalysed reaction is isopentenyl diphosphate + (2E)-geranyl diphosphate = (2E,6E)-farnesyl diphosphate + diphosphate. The enzyme catalyses isopentenyl diphosphate + (2E,6E)-farnesyl diphosphate = (2E,6E,10E)-geranylgeranyl diphosphate + diphosphate. It participates in secondary metabolite biosynthesis. In terms of biological role, geranylgeranyl pyrophosphate synthase; part of the gene cluster that mediates the biosynthesis of paspalitrems, indole-diterpene (IDT) mycotoxins that are potent tremorgens in mammals. The geranylgeranyl diphosphate (GGPP) synthase idtG is proposed to catalyze the first step in IDT biosynthesis via catalysis of a series of iterative condensations of isopentenyl diphosphate (IPP) with dimethylallyl diphosphate (DMAPP), geranyl diphosphate (GPP), and farnesyl diphosphate (FPP), to form GGPP. Condensation of indole-3-glycerol phosphate with GGPP by the prenyltransferase idtC then forms 3-geranylgeranylindole (3-GGI). Epoxidation of the two terminal alkenes of the geranylgeranyl moiety by the FAD-dependent monooxygenase idtM, and cyclization by the terpene cyclase idtB then leads to the production of paspaline. The cytochrome P450 monooxygenase idtP then catalyzes oxidative elimination of the pendant methyl group at C-12 of paspaline and generates the C-10 ketone to yield 13-desoxypaxilline. The cytochrome P450 monooxygenase idtQ may catalyze the C-13 oxidation of 13-desoxypaxilline to afford paxilline. Considering that both paspalicine and paxilline were detected in C.paspali, idtQ also catalyzes the formation of paspalinine from 13-desoxypaxilline via paspalicine as an intermediate. Finally, the alpha-prenyltransferase idtF prenylates paspalinine at the C-20 or the C-21 positions to yield paspalitrems A and C, respectively. The hydroxylation of paspalitrem A at C-32 by a still unknown oxidase affords paspalitrem B. The polypeptide is Geranylgeranyl pyrophosphate synthase idtG (Claviceps paspali (Rye ergot fungus)).